A 125-amino-acid chain; its full sequence is Succinate dehydrogenase assembly factor 3, mitochondrial (125 aa).

The N-terminal 30 residues, 1 to 30, are a transit peptide targeting the mitochondrion; it reads MTGRHVSRVRSLYRRILQLHRALPPDLKAL.

The protein belongs to the complex I LYR family. SDHAF3 subfamily. In terms of assembly, interacts with Sdhb within an Sdha-Sdhb subcomplex.

Its subcellular location is the mitochondrion matrix. Plays an essential role in the assembly of succinate dehydrogenase (SDH), an enzyme complex (also referred to as respiratory complex II) that is a component of both the tricarboxylic acid (TCA) cycle and the mitochondrial electron transport chain, and which couples the oxidation of succinate to fumarate with the reduction of ubiquinone (coenzyme Q) to ubiquinol. Promotes maturation of the iron-sulfur protein subunit Sdhb of the SDH catalytic dimer, protecting it from the deleterious effects of oxidants. May act together with SDHAF1. In Rattus norvegicus (Rat), this protein is Succinate dehydrogenase assembly factor 3, mitochondrial.